We begin with the raw amino-acid sequence, 159 residues long: 2-C-methyl-D-erythritol 2,4-cyclodiphosphate synthase (159 aa).

The a divalent metal cation site is built by Asp10 and His12. Residues 10 to 12 (DVH) and 36 to 37 (HS) each bind 4-CDP-2-C-methyl-D-erythritol 2-phosphate. His44 contacts a divalent metal cation. 4-CDP-2-C-methyl-D-erythritol 2-phosphate contacts are provided by residues 58-60 (DIG), 134-137 (TTSE), Phe141, and Arg144.

It belongs to the IspF family. In terms of assembly, homotrimer. Requires a divalent metal cation as cofactor.

It carries out the reaction 4-CDP-2-C-methyl-D-erythritol 2-phosphate = 2-C-methyl-D-erythritol 2,4-cyclic diphosphate + CMP. It participates in isoprenoid biosynthesis; isopentenyl diphosphate biosynthesis via DXP pathway; isopentenyl diphosphate from 1-deoxy-D-xylulose 5-phosphate: step 4/6. Its function is as follows. Involved in the biosynthesis of isopentenyl diphosphate (IPP) and dimethylallyl diphosphate (DMAPP), two major building blocks of isoprenoid compounds. Catalyzes the conversion of 4-diphosphocytidyl-2-C-methyl-D-erythritol 2-phosphate (CDP-ME2P) to 2-C-methyl-D-erythritol 2,4-cyclodiphosphate (ME-CPP) with a corresponding release of cytidine 5-monophosphate (CMP). The protein is 2-C-methyl-D-erythritol 2,4-cyclodiphosphate synthase of Cereibacter sphaeroides (strain ATCC 17029 / ATH 2.4.9) (Rhodobacter sphaeroides).